The primary structure comprises 427 residues: Retron Mx65 reverse transcriptase (427 aa).

Residues 136 to 366 (RHYSIHRPRE…GAQRVTGVTV (231 aa)) enclose the Reverse transcriptase domain. Residues Asp219, Asp315, and Asp316 each coordinate Mg(2+).

The protein belongs to the bacterial reverse transcriptase family.

The catalysed reaction is DNA(n) + a 2'-deoxyribonucleoside 5'-triphosphate = DNA(n+1) + diphosphate. In terms of biological role, reverse transcriptase (RT) responsible for synthesis of msDNA-Mx65 (a branched molecule with RNA linked by a 2',5'-phosphodiester bond to ssDNA). The retron transcript serves as primer (from a conserved internal G residue) and template for the reaction, and codes for the RT. The retron is involved in antiviral defense. This chain is Retron Mx65 reverse transcriptase, found in Myxococcus xanthus.